Reading from the N-terminus, the 179-residue chain is Large ribosomal subunit protein uL5 (179 aa).

It belongs to the universal ribosomal protein uL5 family. In terms of assembly, part of the 50S ribosomal subunit; part of the 5S rRNA/L5/L18/L25 subcomplex. Contacts the 5S rRNA and the P site tRNA. Forms a bridge to the 30S subunit in the 70S ribosome.

This is one of the proteins that bind and probably mediate the attachment of the 5S RNA into the large ribosomal subunit, where it forms part of the central protuberance. In the 70S ribosome it contacts protein S13 of the 30S subunit (bridge B1b), connecting the 2 subunits; this bridge is implicated in subunit movement. Contacts the P site tRNA; the 5S rRNA and some of its associated proteins might help stabilize positioning of ribosome-bound tRNAs. This chain is Large ribosomal subunit protein uL5, found in Saccharophagus degradans (strain 2-40 / ATCC 43961 / DSM 17024).